The sequence spans 387 residues: S-adenosylmethionine synthase (387 aa).

Position 17 (histidine 17) interacts with ATP. A Mg(2+)-binding site is contributed by aspartate 19. Glutamate 45 is a binding site for K(+). Glutamate 58 and glutamine 101 together coordinate L-methionine. Residues 101-111 (QSPDIAQGVDR) form a flexible loop region. ATP-binding positions include 168–170 (DAK), 234–235 (RF), aspartate 243, 249–250 (RK), alanine 266, and lysine 270. Aspartate 243 lines the L-methionine pocket. Lysine 274 contacts L-methionine.

It belongs to the AdoMet synthase family. In terms of assembly, homotetramer; dimer of dimers. It depends on Mg(2+) as a cofactor. Requires K(+) as cofactor.

The protein localises to the cytoplasm. It carries out the reaction L-methionine + ATP + H2O = S-adenosyl-L-methionine + phosphate + diphosphate. The protein operates within amino-acid biosynthesis; S-adenosyl-L-methionine biosynthesis; S-adenosyl-L-methionine from L-methionine: step 1/1. Its function is as follows. Catalyzes the formation of S-adenosylmethionine (AdoMet) from methionine and ATP. The overall synthetic reaction is composed of two sequential steps, AdoMet formation and the subsequent tripolyphosphate hydrolysis which occurs prior to release of AdoMet from the enzyme. In Bordetella bronchiseptica (strain ATCC BAA-588 / NCTC 13252 / RB50) (Alcaligenes bronchisepticus), this protein is S-adenosylmethionine synthase.